Consider the following 244-residue polypeptide: Small ribosomal subunit protein eS4 (244 aa).

The region spanning 43-106 (LPLLLIVRDT…NENYLVLFDE (64 aa)) is the S4 RNA-binding domain.

It belongs to the eukaryotic ribosomal protein eS4 family.

The chain is Small ribosomal subunit protein eS4 (rps4e) from Methanococcus vannielii.